Consider the following 104-residue polypeptide: Large ribosomal subunit protein bL21 (104 aa).

Positions 78-91 are enriched in basic residues; that stretch reads KRRRQNSRRKRGHR. Residues 78 to 104 form a disordered region; that stretch reads KRRRQNSRRKRGHRQDHTVVRITGISA.

The protein belongs to the bacterial ribosomal protein bL21 family. Part of the 50S ribosomal subunit. Contacts protein L20.

Its function is as follows. This protein binds to 23S rRNA in the presence of protein L20. This is Large ribosomal subunit protein bL21 from Methylobacterium radiotolerans (strain ATCC 27329 / DSM 1819 / JCM 2831 / NBRC 15690 / NCIMB 10815 / 0-1).